The following is a 307-amino-acid chain: 1-phosphofructokinase (307 aa).

Residues 217 to 222 (SMGSDG) and 249 to 250 (GD) each bind ATP. The Proton acceptor role is filled by Asp-250.

Belongs to the carbohydrate kinase PfkB family.

It catalyses the reaction beta-D-fructose 1-phosphate + ATP = beta-D-fructose 1,6-bisphosphate + ADP + H(+). In terms of biological role, catalyzes the ATP-dependent phosphorylation of fructose-l-phosphate to fructose-l,6-bisphosphate. This chain is 1-phosphofructokinase (fruK), found in Borreliella burgdorferi (strain ATCC 35210 / DSM 4680 / CIP 102532 / B31) (Borrelia burgdorferi).